The primary structure comprises 378 residues: Erythronate-4-phosphate dehydrogenase (378 aa).

2 residues coordinate substrate: Ser45 and Thr66. Residues Asp146 and Thr175 each contribute to the NAD(+) site. Arg208 is a catalytic residue. Asp232 provides a ligand contact to NAD(+). Glu237 is a catalytic residue. The Proton donor role is filled by His254. An NAD(+)-binding site is contributed by Gly257. Tyr258 lines the substrate pocket.

It belongs to the D-isomer specific 2-hydroxyacid dehydrogenase family. PdxB subfamily. As to quaternary structure, homodimer.

The protein resides in the cytoplasm. The catalysed reaction is 4-phospho-D-erythronate + NAD(+) = (R)-3-hydroxy-2-oxo-4-phosphooxybutanoate + NADH + H(+). The protein operates within cofactor biosynthesis; pyridoxine 5'-phosphate biosynthesis; pyridoxine 5'-phosphate from D-erythrose 4-phosphate: step 2/5. Functionally, catalyzes the oxidation of erythronate-4-phosphate to 3-hydroxy-2-oxo-4-phosphonooxybutanoate. The polypeptide is Erythronate-4-phosphate dehydrogenase (Escherichia coli O139:H28 (strain E24377A / ETEC)).